The primary structure comprises 546 residues: uncharacterized protein (546 aa).

Positions 52–123 (SVAELRDVQP…NTIEQLLQEN (72 aa)) constitute an SLH domain.

It belongs to the OprB family.

This is an uncharacterized protein from Synechocystis sp. (strain ATCC 27184 / PCC 6803 / Kazusa).